The following is a 291-amino-acid chain: Early E4 34 kDa protein (291 aa).

This sequence belongs to the adenoviridae E4 30 to 34 kDa protein family. As to quaternary structure, interacts with E1B-55k.

It is found in the host nucleus. It localises to the host cytoplasm. Its function is as follows. Plays a major role to prevent cellular inhibition of viral genome replication by nuclear bodies. Assembles an SCF-like E3 ubiquitin ligase complex based on the cellular proteins ELOB, ELOC, CUL5 and RBX1, in cooperation with viral E1B-55K. This viral RING-type ligase ubiquitinates cellular substrates prior to proteasomal degradation: p53/TP53, LIG4, MRE11-RAD50-NBS1 (MRN) complex, ITGA3, DAXX and BLM. This Homo sapiens (Human) protein is Early E4 34 kDa protein.